A 739-amino-acid polypeptide reads, in one-letter code: Polyribonucleotide nucleotidyltransferase (739 aa).

Mg(2+)-binding residues include D487 and D493. A KH domain is found at 554–613; sequence PRIETMQIPTDKIRDVIGTGGKVIREIVEKTGAKINIEDTGVVKIASADGKAIKAAYNWI. The S1 motif domain maps to 623-691; that stretch reads GVIYDGTIVK…DRGKIRLSMK (69 aa). The segment at 694–739 is disordered; sequence DQQTGEDITDKIKAQRDAERAERGDEPREPREGGRHRGERRREAGE. Residues 701–739 show a composition bias toward basic and acidic residues; it reads ITDKIKAQRDAERAERGDEPREPREGGRHRGERRREAGE.

It belongs to the polyribonucleotide nucleotidyltransferase family. Mg(2+) is required as a cofactor.

The protein resides in the cytoplasm. It catalyses the reaction RNA(n+1) + phosphate = RNA(n) + a ribonucleoside 5'-diphosphate. Functionally, involved in mRNA degradation. Catalyzes the phosphorolysis of single-stranded polyribonucleotides processively in the 3'- to 5'-direction. In Methylobacterium radiotolerans (strain ATCC 27329 / DSM 1819 / JCM 2831 / NBRC 15690 / NCIMB 10815 / 0-1), this protein is Polyribonucleotide nucleotidyltransferase.